Here is a 182-residue protein sequence, read N- to C-terminus: Isopentenyl-diphosphate Delta-isomerase (182 aa).

Mn(2+) contacts are provided by H25 and H32. One can recognise a Nudix hydrolase domain in the interval 30-164 (LLHLAFSSWL…PWAFSPWMVM (135 aa)). C67 is an active-site residue. H69 is a Mn(2+) binding site. Residue E87 coordinates Mg(2+). Mn(2+)-binding residues include E114 and E116. E116 is a catalytic residue.

This sequence belongs to the IPP isomerase type 1 family. Homodimer. Mg(2+) is required as a cofactor. Mn(2+) serves as cofactor.

It is found in the cytoplasm. The enzyme catalyses isopentenyl diphosphate = dimethylallyl diphosphate. The protein operates within isoprenoid biosynthesis; dimethylallyl diphosphate biosynthesis; dimethylallyl diphosphate from isopentenyl diphosphate: step 1/1. In terms of biological role, catalyzes the 1,3-allylic rearrangement of the homoallylic substrate isopentenyl (IPP) to its highly electrophilic allylic isomer, dimethylallyl diphosphate (DMAPP). In Escherichia coli O17:K52:H18 (strain UMN026 / ExPEC), this protein is Isopentenyl-diphosphate Delta-isomerase.